The chain runs to 355 residues: Acyl-CoA desaturase 1 (355 aa).

Topologically, residues 1–68 (MPAHMLQEIS…EGPPPKLEYV (68 aa)) are cytoplasmic. The span at 9-20 (ISSSYTTTTTIT) shows a compositional bias: low complexity. The interval 9–33 (ISSSYTTTTTITAPPSGNEREKVKT) is disordered. The chain crosses the membrane as a helical span at residues 69 to 89 (WRNIILMVLLHLGGLYGIILV). Asn-71 provides a ligand contact to substrate. Residues 90–93 (PSCK) lie on the Lumenal side of the membrane. Residues 94–114 (LYTCLFGIFYYMTSALGITAG) form a helical membrane-spanning segment. The Cytoplasmic portion of the chain corresponds to 115 to 213 (AHRLWSHRTY…EKLVMFQRRY (99 aa)). Residues His-116 and His-121 each contribute to the Fe cation site. A Histidine box-1 motif is present at residues 116–121 (HRLWSH). Substrate-binding residues include Asn-144, Arg-151, and Asp-152. 3 residues coordinate Fe cation: His-153, His-156, and His-157. The Histidine box-2 motif lies at 153–157 (HRAHH). Residues Arg-184 and Lys-185 each contribute to the substrate site. Residues 214–233 (YKPGLLLMCFILPTLVPWYC) traverse the membrane as a helical segment. The Lumenal portion of the chain corresponds to 234 to 237 (WGET). A helical membrane pass occupies residues 238-259 (FVNSLFVSTFLRYTLVLNATWL). Residue Trp-258 participates in substrate binding. The Cytoplasmic portion of the chain corresponds to 260 to 355 (VNSAAHLYGY…RTGDGSHKSS (96 aa)). Fe cation is bound by residues His-265, His-294, His-297, and His-298. Positions 294–298 (HNYHH) match the Histidine box-3 motif.

The protein belongs to the fatty acid desaturase type 1 family. The cofactor is Fe(2+). In terms of tissue distribution, detected in liver (at protein level). Detected in skin and liver. Detected in sebaceous gland, but not in hair follicle. Detected in white and brown adipose tissue, eyelid, Harderian gland, and at lower levels in Meibomian gland, eyeball and adrenal gland. Highly expressed in liver, and detected at low levels in brain, heart, lung, stomach, skeletal muscle and kidney.

The protein resides in the endoplasmic reticulum membrane. The protein localises to the microsome membrane. It catalyses the reaction octadecanoyl-CoA + 2 Fe(II)-[cytochrome b5] + O2 + 2 H(+) = (9Z)-octadecenoyl-CoA + 2 Fe(III)-[cytochrome b5] + 2 H2O. Functionally, stearoyl-CoA desaturase that utilizes O(2) and electrons from reduced cytochrome b5 to introduce the first double bond into saturated fatty acyl-CoA substrates. Catalyzes the insertion of a cis double bond at the Delta-9 position into fatty acyl-CoA substrates including palmitoyl-CoA and stearoyl-CoA. Gives rise to a mixture of 16:1 and 18:1 unsaturated fatty acids. Plays an important role in lipid biosynthesis. Plays an important role in regulating the expression of genes that are involved in lipogenesis and in regulating mitochondrial fatty acid oxidation. Plays an important role in body energy homeostasis. Contributes to the biosynthesis of membrane phospholipids, cholesterol esters and triglycerides. Required for normal development of sebaceous glands. Required for the biosynthesis of normal levels of Delta-9 unsaturated fatty acids and 1-alkyl-2,3-diacylglycerol in the Harderian gland. Required for normal production of meibum, an oily material that prevents drying of the cornea. The protein is Acyl-CoA desaturase 1 (Scd1) of Mus musculus (Mouse).